A 425-amino-acid polypeptide reads, in one-letter code: Arogenate dehydratase 5, chloroplastic (425 aa).

The transit peptide at 1–38 (MQTISPAFSCDLKSVIQPNLTAKKARYSHVNGKRVSVR) directs the protein to the chloroplast. Positions 127 to 304 (RVAYQGVPGA…NVTRFLMLAR (178 aa)) constitute a Prephenate dehydratase domain. The ACT domain occupies 320–411 (VFAAQEHKGT…SFLRVLGSYP (92 aa)).

As to expression, expressed in roots, leaves, stems, flowers and siliques. More abundant in stems and roots.

It is found in the plastid. The protein localises to the chloroplast stroma. The catalysed reaction is L-arogenate + H(+) = L-phenylalanine + CO2 + H2O. The protein operates within amino-acid biosynthesis; L-phenylalanine biosynthesis; L-phenylalanine from L-arogenate: step 1/1. Converts the prephenate produced from the shikimate-chorismate pathway into phenylalanine. The polypeptide is Arogenate dehydratase 5, chloroplastic (Arabidopsis thaliana (Mouse-ear cress)).